A 166-amino-acid polypeptide reads, in one-letter code: 3-hydroxyacyl-[acyl-carrier-protein] dehydratase FabZ (166 aa).

The active site involves His-72.

This sequence belongs to the thioester dehydratase family. FabZ subfamily.

It localises to the cytoplasm. The enzyme catalyses a (3R)-hydroxyacyl-[ACP] = a (2E)-enoyl-[ACP] + H2O. In terms of biological role, involved in unsaturated fatty acids biosynthesis. Catalyzes the dehydration of short chain beta-hydroxyacyl-ACPs and long chain saturated and unsaturated beta-hydroxyacyl-ACPs. This Synechococcus sp. (strain JA-2-3B'a(2-13)) (Cyanobacteria bacterium Yellowstone B-Prime) protein is 3-hydroxyacyl-[acyl-carrier-protein] dehydratase FabZ.